A 397-amino-acid chain; its full sequence is Elongation factor Tu (397 aa).

A tr-type G domain is found at 10 to 206; the sequence is KPHVNIGTIG…AVDDSIPEPQ (197 aa). A G1 region spans residues 19–26; sequence GHIDHGKT. 19-26 is a binding site for GTP; the sequence is GHIDHGKT. Threonine 26 contacts Mg(2+). Residues 62-66 form a G2 region; the sequence is GITIS. The G3 stretch occupies residues 83–86; sequence DCPG. GTP contacts are provided by residues 83 to 87 and 138 to 141; these read DCPGH and NKAD. The interval 138-141 is G4; sequence NKAD. Residues 176–178 are G5; sequence SAL.

It belongs to the TRAFAC class translation factor GTPase superfamily. Classic translation factor GTPase family. EF-Tu/EF-1A subfamily. Monomer.

The protein localises to the cytoplasm. The catalysed reaction is GTP + H2O = GDP + phosphate + H(+). In terms of biological role, GTP hydrolase that promotes the GTP-dependent binding of aminoacyl-tRNA to the A-site of ribosomes during protein biosynthesis. This chain is Elongation factor Tu, found in Frankia alni (strain DSM 45986 / CECT 9034 / ACN14a).